The sequence spans 265 residues: Non-seed lectin (265 aa).

Residues 1–21 (MALYRTKELVSLVSIMFVLLA) constitute a signal peptide (or 23). Residues asparagine 59 and asparagine 127 are each glycosylated (N-linked (GlcNAc...) asparagine).

Belongs to the leguminous lectin family. In terms of assembly, monomer. In terms of tissue distribution, most highly expressed in the epidermal layer of developing shoot tips.

This Pisum sativum (Garden pea) protein is Non-seed lectin.